A 352-amino-acid polypeptide reads, in one-letter code: Divinyl chlorophyll a/b light-harvesting protein PcbH (352 aa).

6 consecutive transmembrane segments (helical) span residues 27–47 (FIGSHVGHTGIICFATGASCL), 88–108 (VATIAIFHLIFSMVYGGAGLA), 140–160 (FILGHHLIFLGVANIWFVEWA), 202–222 (VMSGHAFLAFLQISGGAFHIA), 242–262 (AVLSWSLAGLFLMGVVAAFWA), and 309–329 (LVNVQYYFAFFCLQGHLWHAL).

This sequence belongs to the PsbB/PsbC family. IsiA/Pcb subfamily. In terms of assembly, the antenna complex consists of divinyl chlorophylls (a and b) and divinyl chlorophyll a/b binding proteins and binds more divinyl chlorophyll b than does the antenna complex from high-light-adapted Prochlorococcus. It depends on divinyl chlorophyll a as a cofactor. Divinyl chlorophyll b serves as cofactor.

It localises to the cellular thylakoid membrane. Functionally, the antenna complex functions as a light receptor, it captures and delivers excitation energy to photosystems II and I. The Prochlorales pcb genes are not related to higher plant LHCs. The protein is Divinyl chlorophyll a/b light-harvesting protein PcbH (pcbH) of Prochlorococcus marinus (strain SARG / CCMP1375 / SS120).